A 152-amino-acid chain; its full sequence is Arginine repressor (152 aa).

This sequence belongs to the ArgR family.

Its subcellular location is the cytoplasm. Its pathway is amino-acid biosynthesis; L-arginine biosynthesis [regulation]. Its function is as follows. Regulates arginine biosynthesis genes. The sequence is that of Arginine repressor from Lachnoclostridium phytofermentans (strain ATCC 700394 / DSM 18823 / ISDg) (Clostridium phytofermentans).